A 428-amino-acid polypeptide reads, in one-letter code: Proteinase-activated receptor 1 (428 aa).

An N-terminal signal peptide occupies residues 1–21 (MGPQRLLLVAAGLSLCGPLLS). Residues 22-41 (SRVPVRQPESEMTDATVNPR) constitute a propeptide, removed for receptor activation. Topologically, residues 42–105 (SFFLRNPGEN…SGYLTSPWLR (64 aa)) are extracellular. Residues asparagine 65 and asparagine 78 are each glycosylated (N-linked (GlcNAc...) asparagine). A helical membrane pass occupies residues 106 to 131 (LFIPSVYTFVFVVSLPLNILAIAVFV). At 132-140 (LKMKVKKPA) the chain is on the cytoplasmic side. The helical transmembrane segment at 141–160 (VVYMLHLAMADVLFVSVLPL) threads the bilayer. Residues 161–179 (KISYYFSGSDWQFGSGMCR) are Extracellular-facing. A disulfide bridge connects residues cysteine 178 and cysteine 257. The helical transmembrane segment at 180–201 (FATAAFYCNMYASIMLMTVISI) threads the bilayer. Residues 202 to 221 (DRFLAVVYPIQSLSWRTLGR) are Cytoplasmic-facing. Residues 222–242 (ANFTCLVIWVMAIMGVVPLLL) form a helical membrane-spanning segment. The Extracellular segment spans residues 243–271 (KEQTTRVPGLNITTCHDVLNETLLQGFYS). N-linked (GlcNAc...) asparagine glycans are attached at residues asparagine 253 and asparagine 262. A helical transmembrane segment spans residues 272 to 291 (YYFSAFSAVFFLVPLIISTI). The Cytoplasmic segment spans residues 292–314 (CYMSIIRCLSSSSVANRSKKSRA). The chain crosses the membrane as a helical span at residues 315-337 (LFLSAAVFCVFIVCFGPTNVLLI). At 338-352 (MHYLLLSDSPATEKA) the chain is on the extracellular side. The chain crosses the membrane as a helical span at residues 353 to 377 (YFAYLLCVCVSSVSCCIDPLIYYYA). Topologically, residues 378–428 (SSECQRHLYGILCCKESSDPNSYNSTGQLMPSKMDTCSSHLNNSIYKKLLA) are cytoplasmic. Residue serine 421 is modified to Phosphoserine.

The protein belongs to the G-protein coupled receptor 1 family. Post-translationally, proteolytic cleavage by thrombin generates a new N-terminus that functions as a tethered ligand. Also proteolytically cleaved by cathepsin CTSG. Phosphorylated in the C-terminal tail; probably mediating desensitization prior to the uncoupling and internalization of the receptor.

It is found in the cell membrane. In terms of biological role, high affinity receptor that binds the activated thrombin, leading to calcium release from intracellular stores. The thrombin-activated receptor signaling pathway is mediated through PTX-insensitive G proteins, activation of phospholipase C resulting in the production of 1D-myo-inositol 1,4,5-trisphosphate (InsP3) which binds to InsP3 receptors causing calcium release from the stores. In astrocytes, the calcium released into the cytosol allows the Ca(2+)-dependent release of L-glutamate into the synaptic cleft through BEST1, that targets the neuronal postsynaptic GRIN2A/NMDAR receptor resulting in the synaptic plasticity regulation. May play a role in platelets activation and in vascular development. Mediates up-regulation of pro-inflammatory cytokines, such as MCP-1/CCL2 and IL6, triggered by coagulation factor Xa (F10) in cardiac fibroblasts and umbilical vein endothelial cells. The protein is Proteinase-activated receptor 1 of Cricetulus longicaudatus (Long-tailed dwarf hamster).